We begin with the raw amino-acid sequence, 64 residues long: Putative antitoxin VapB51 (64 aa).

In terms of biological role, possibly the antitoxin component of a type II toxin-antitoxin (TA) system. Its cognate toxin is VapC51. This chain is Putative antitoxin VapB51, found in Mycobacterium tuberculosis (strain ATCC 25618 / H37Rv).